A 178-amino-acid chain; its full sequence is CASP-like protein 4D1 (178 aa).

At 1 to 14 the chain is on the cytoplasmic side; it reads MAPPPPSPPSVTLR. The chain crosses the membrane as a helical span at residues 15–35; that stretch reads TVLLLLRVLTAAFLVITVVLI. Topologically, residues 36–60 are extracellular; it reads STNTVTLEVSSTSIKMRFNDVYAYR. The helical transmembrane segment at 61–81 threads the bilayer; sequence YMLSAAVIGLLYAVVQLFLTI. At 82–149 the chain is on the cytoplasmic side; the sequence is SQFATGTTHP…KFFSKGYASA (68 aa). Residues 150–170 form a helical membrane-spanning segment; that stretch reads SLLLFAFVSLAVLSVFSSLAL. Topologically, residues 171–178 are extracellular; sequence SKRPIQVS.

The protein belongs to the Casparian strip membrane proteins (CASP) family. As to quaternary structure, homodimer and heterodimers.

The protein resides in the cell membrane. The polypeptide is CASP-like protein 4D1 (Arabidopsis lyrata subsp. lyrata (Lyre-leaved rock-cress)).